Reading from the N-terminus, the 720-residue chain is MTQQEYRSPSQRLSKGRSMSLPKIFARNLRSLQNNAPPGKNINVNCLNVNSCSLSASPSSQINMACNGNKQDLPIPFPLHVECNDSWSSSKLNKFKSMFNHNRSKSSGTTDASTSEKGTHKREPRSTIHTELLQSSIIGEPNVHSTTSSTLIPNEAICSTPNEISGSSSPDAELFTFDMPTDPSSFHTPSSPSYIAKDSRNLSNGSLNDINENEELQNFHRKISENGSASPLANLSLSNSPIDSPRKNSETRKDQIPMNITPRLRRAASEPFNTAKDGLMREDYIALKQPPSLGDIVEPRRSRRLRTKSFGNKFQDITVEPQSFEKIRLLGQGDVGKVYLVRERDTNQIFALKVLNKHEMIKRKKIKRVLTEQEILATSDHPFIVTLYHSFQTKDYLYLCMEYCMGGEFFRALQTRKSKCIAEEDAKFYASEVVAALEYLHLLGFIYRDLKPENILLHQSGHVMLSDFDLSIQATGSKKPTMKDSTYLDTKICSDGFRTNSFVGTEEYLAPEVIRGNGHTAAVDWWTLGILIYEMLFGCTPFKGDNSNETFSNILTKDVKFPHDKEVSKNCKDLIKKLLNKNEAKRLGSKSGAADIKRHPFFKKVQWSFLRNQDPPLIPALNDNGCELPFILSCNKHPKRNSVSEQETKMFCEKVANDDEIDEADPFHDFNSMSLTKKDHNILTYSENYTYGKILYKATCTRPRHNSSHRSFFKDIIPEL.

2 stretches are compositionally biased toward polar residues: residues 1-13 (MTQQ…SQRL) and 99-116 (FNHN…STSE). Disordered regions lie at residues 1-20 (MTQQ…RSMS) and 99-128 (FNHN…RSTI). Ser203 bears the Phosphoserine mark. Positions 230 to 241 (SPLANLSLSNSP) are enriched in low complexity. The segment at 230 to 257 (SPLANLSLSNSPIDSPRKNSETRKDQIP) is disordered. The segment covering 244–255 (SPRKNSETRKDQ) has biased composition (basic and acidic residues). One can recognise a Protein kinase domain in the interval 324–602 (FEKIRLLGQG…AADIKRHPFF (279 aa)). ATP contacts are provided by residues 330 to 338 (LGQGDVGKV) and Lys353. Asp449 serves as the catalytic Proton acceptor.

This sequence belongs to the protein kinase superfamily. Ser/Thr protein kinase family. KIN82 subfamily.

The enzyme catalyses L-seryl-[protein] + ATP = O-phospho-L-seryl-[protein] + ADP + H(+). It carries out the reaction L-threonyl-[protein] + ATP = O-phospho-L-threonyl-[protein] + ADP + H(+). In terms of biological role, flippase activator that phosphorylates DFN1 and DFN2 and which is involved in the generation of phospholipid asymmetry in membranes by the inward translocation of phospholipids. The chain is Serine/threonine-protein kinase KIN82 (KIN82) from Saccharomyces cerevisiae (strain ATCC 204508 / S288c) (Baker's yeast).